The sequence spans 568 residues: Mannitol 2-dehydrogenase (568 aa).

109–120 (IVHVGVGGFHRA) lines the NAD(+) pocket.

The protein belongs to the mannitol dehydrogenase family. As to quaternary structure, monomer.

It catalyses the reaction D-mannitol + NAD(+) = D-fructose + NADH + H(+). Its function is as follows. Catalyzes the NAD(H)-dependent interconversion of D-fructose and D-mannitol in the mannitol metabolic pathway. The protein is Mannitol 2-dehydrogenase of Phaeosphaeria nodorum (strain SN15 / ATCC MYA-4574 / FGSC 10173) (Glume blotch fungus).